A 249-amino-acid chain; its full sequence is 2,3-bisphosphoglycerate-dependent phosphoglycerate mutase (249 aa).

Residues 9–16 (RHGESEWN), 22–23 (TG), Arg-61, 88–91 (ERHY), Lys-99, 115–116 (RR), and 184–185 (GN) contribute to the substrate site. The active-site Tele-phosphohistidine intermediate is the His-10. Glu-88 (proton donor/acceptor) is an active-site residue.

This sequence belongs to the phosphoglycerate mutase family. BPG-dependent PGAM subfamily.

It catalyses the reaction (2R)-2-phosphoglycerate = (2R)-3-phosphoglycerate. It functions in the pathway carbohydrate degradation; glycolysis; pyruvate from D-glyceraldehyde 3-phosphate: step 3/5. In terms of biological role, catalyzes the interconversion of 2-phosphoglycerate and 3-phosphoglycerate. The polypeptide is 2,3-bisphosphoglycerate-dependent phosphoglycerate mutase (Cutibacterium acnes (strain DSM 16379 / KPA171202) (Propionibacterium acnes)).